We begin with the raw amino-acid sequence, 393 residues long: S-adenosylmethionine synthase (393 aa).

E9 contacts Mg(2+). An ATP-binding site is contributed by H15. E43 is a binding site for K(+). L-methionine-binding residues include E56 and Q99. ATP is bound by residues 167–169 (DGK), 235–238 (SGRF), D246, 252–253 (RK), A269, K273, and K277. D246 lines the L-methionine pocket. K277 provides a ligand contact to L-methionine.

It belongs to the AdoMet synthase family. As to quaternary structure, homotetramer. The cofactor is Mn(2+). Mg(2+) serves as cofactor. It depends on Co(2+) as a cofactor. Requires K(+) as cofactor.

Its subcellular location is the cytoplasm. The catalysed reaction is L-methionine + ATP + H2O = S-adenosyl-L-methionine + phosphate + diphosphate. The protein operates within amino-acid biosynthesis; S-adenosyl-L-methionine biosynthesis; S-adenosyl-L-methionine from L-methionine: step 1/1. In terms of biological role, catalyzes the formation of S-adenosylmethionine from methionine and ATP. The reaction comprises two steps that are both catalyzed by the same enzyme: formation of S-adenosylmethionine (AdoMet) and triphosphate, and subsequent hydrolysis of the triphosphate. This is S-adenosylmethionine synthase (SAMS) from Litchi chinensis (Lychee).